The following is a 555-amino-acid chain: Formate--tetrahydrofolate ligase (555 aa).

65 to 72 (TPAGEGKS) contacts ATP.

This sequence belongs to the formate--tetrahydrofolate ligase family.

It catalyses the reaction (6S)-5,6,7,8-tetrahydrofolate + formate + ATP = (6R)-10-formyltetrahydrofolate + ADP + phosphate. The protein operates within one-carbon metabolism; tetrahydrofolate interconversion. This chain is Formate--tetrahydrofolate ligase, found in Staphylococcus aureus (strain Mu3 / ATCC 700698).